A 139-amino-acid polypeptide reads, in one-letter code: Protein Turandot B (139 aa).

The first 21 residues, 1 to 21 (MNFNMSMICFALLLIVTLCSA), serve as a signal peptide directing secretion.

The protein belongs to the Turandot family.

The protein resides in the secreted. In terms of biological role, a humoral factor that may play a role in stress tolerance. In Drosophila yakuba (Fruit fly), this protein is Protein Turandot B.